A 105-amino-acid chain; its full sequence is Flagellar transcriptional regulator FlhD (105 aa).

This sequence belongs to the FlhD family. In terms of assembly, homodimer; disulfide-linked. Forms a heterohexamer composed of two FlhC and four FlhD subunits. Each FlhC binds a FlhD dimer, forming a heterotrimer, and a hexamer assembles by dimerization of two heterotrimers.

The protein resides in the cytoplasm. Functions in complex with FlhC as a master transcriptional regulator that regulates transcription of several flagellar and non-flagellar operons by binding to their promoter region. Activates expression of class 2 flagellar genes, including fliA, which is a flagellum-specific sigma factor that turns on the class 3 genes. Also regulates genes whose products function in a variety of physiological pathways. In Nitrosomonas eutropha (strain DSM 101675 / C91 / Nm57), this protein is Flagellar transcriptional regulator FlhD.